Reading from the N-terminus, the 85-residue chain is DNA-directed RNA polymerase subunit omega (85 aa).

This sequence belongs to the RNA polymerase subunit omega family. As to quaternary structure, the RNAP catalytic core consists of 2 alpha, 1 beta, 1 beta' and 1 omega subunit. When a sigma factor is associated with the core the holoenzyme is formed, which can initiate transcription.

It carries out the reaction RNA(n) + a ribonucleoside 5'-triphosphate = RNA(n+1) + diphosphate. Functionally, promotes RNA polymerase assembly. Latches the N- and C-terminal regions of the beta' subunit thereby facilitating its interaction with the beta and alpha subunits. The polypeptide is DNA-directed RNA polymerase subunit omega (Tropheryma whipplei (strain TW08/27) (Whipple's bacillus)).